The following is a 186-amino-acid chain: MASEDPSVSGVSGRYATALFELARDEKSIDAVTADLDKFSAMLAGSPDLVRLVRSPVFASEVQGKALAAVLDKAGITGISANFLKVLAANRRLFVVADVIRAYRALVAKFKGEATADVTVAEKLSDKNLEALKAALKSVTGKDVALNINVDPAIIGGLVVKLGSRMVDSSLRTKLNSIKHAMKEAG.

It belongs to the ATPase delta chain family. F-type ATPases have 2 components, F(1) - the catalytic core - and F(0) - the membrane proton channel. F(1) has five subunits: alpha(3), beta(3), gamma(1), delta(1), epsilon(1). CF(0) has four main subunits: a(1), b(1), b'(1) and c(10-14). The alpha and beta chains form an alternating ring which encloses part of the gamma chain. F(1) is attached to F(0) by a central stalk formed by the gamma and epsilon chains, while a peripheral stalk is formed by the delta, b and b' chains.

It localises to the cell inner membrane. Functionally, f(1)F(0) ATP synthase produces ATP from ADP in the presence of a proton or sodium gradient. F-type ATPases consist of two structural domains, F(1) containing the extramembraneous catalytic core and F(0) containing the membrane proton channel, linked together by a central stalk and a peripheral stalk. During catalysis, ATP synthesis in the catalytic domain of F(1) is coupled via a rotary mechanism of the central stalk subunits to proton translocation. This protein is part of the stalk that links CF(0) to CF(1). It either transmits conformational changes from CF(0) to CF(1) or is implicated in proton conduction. The protein is ATP synthase subunit delta of Rhodopseudomonas palustris (strain ATCC BAA-98 / CGA009).